The chain runs to 471 residues: Alpha-amylase (471 aa).

At glutamine 1 the chain carries Pyrrolidone carboxylic acid. Cysteines 28 and 84 form a disulfide. Ca(2+) is bound by residues asparagine 98, arginine 146, and aspartate 155. Cysteine 134 and cysteine 148 are oxidised to a cystine. Arginine 183 lines the chloride pocket. The Nucleophile role is filled by aspartate 185. Histidine 189 is a Ca(2+) binding site. Glutamate 222 functions as the Proton donor in the catalytic mechanism. Chloride-binding residues include asparagine 285 and arginine 321. Residues 326-343 are compositionally biased toward polar residues; that stretch reads FDFTDNDQGPPQDGSGNL. The interval 326–346 is disordered; that stretch reads FDFTDNDQGPPQDGSGNLISP. Cystine bridges form between cysteine 354-cysteine 360 and cysteine 425-cysteine 437.

It belongs to the glycosyl hydrolase 13 family. In terms of assembly, monomer. Ca(2+) is required as a cofactor. Chloride serves as cofactor.

The catalysed reaction is Endohydrolysis of (1-&gt;4)-alpha-D-glucosidic linkages in polysaccharides containing three or more (1-&gt;4)-alpha-linked D-glucose units.. This Tenebrio molitor (Yellow mealworm beetle) protein is Alpha-amylase.